A 216-amino-acid chain; its full sequence is Elongation factor Ts (216 aa).

The involved in Mg(2+) ion dislocation from EF-Tu stretch occupies residues 81 to 84 (TDFV).

It belongs to the EF-Ts family.

The protein localises to the cytoplasm. In terms of biological role, associates with the EF-Tu.GDP complex and induces the exchange of GDP to GTP. It remains bound to the aminoacyl-tRNA.EF-Tu.GTP complex up to the GTP hydrolysis stage on the ribosome. The protein is Elongation factor Ts of Geobacter metallireducens (strain ATCC 53774 / DSM 7210 / GS-15).